The following is a 129-amino-acid chain: Small ribosomal subunit protein uS9 (129 aa).

The tract at residues 98–129 (KAQGFLTRDPRKKERKKYGRKKARKSFQFSKR) is disordered. Residues 110 to 129 (KERKKYGRKKARKSFQFSKR) show a composition bias toward basic residues.

The protein belongs to the universal ribosomal protein uS9 family.

The sequence is that of Small ribosomal subunit protein uS9 from Chlamydia trachomatis serovar L2 (strain ATCC VR-902B / DSM 19102 / 434/Bu).